Consider the following 423-residue polypeptide: UPF0229 protein PSPA7_0730 (423 aa).

A disordered region spans residues 84–107 (AGEHIARPSGGGGGRGGGKASNSG). Residues 92-102 (SGGGGGRGGGK) show a composition bias toward gly residues.

This sequence belongs to the UPF0229 family.

The chain is UPF0229 protein PSPA7_0730 from Pseudomonas paraeruginosa (strain DSM 24068 / PA7) (Pseudomonas aeruginosa (strain PA7)).